Consider the following 1708-residue polypeptide: Rapamycin-insensitive companion of mTOR (1708 aa).

Residues 1–789 (MAAIGRGRSL…DKANLHALIQ (789 aa)) form an interaction with NBN region. 3 positions are modified to phosphoserine: Ser-21, Ser-35, and Ser-265. Lys-274 is covalently cross-linked (Glycyl lysine isopeptide (Lys-Gly) (interchain with G-Cter in ubiquitin)). Residues 521–570 (LKDTEEALLINLRDSQVLQHKENLEWNWNLIGTILKWPNVNLRNYKDEQL) are ribosome-binding domain. The ATP site is built by Asn-543, Arg-572, and Arg-576. Positions 1022–1041 (LSLNSESTSSRHNSESESVP) are disordered. N6-acetyllysine occurs at positions 1092 and 1095. Thr-1103 is subject to Phosphothreonine. The interval 1103–1134 (TLPNKKHRSSSDPKGGKLSSESKTSNRRIRTL) is disordered. An N6-acetyllysine mark is found at Lys-1116, Lys-1119, and Lys-1125. Thr-1135 carries the post-translational modification Phosphothreonine; by RPS6KB1. Phosphoserine occurs at positions 1138, 1162, and 1219. Residues 1204 to 1252 (VVESSTSSHMKIRSQSFNTDTTTSGISSMSSSPSRETVGVDATTMDTDC) are disordered. Positions 1206–1221 (ESSTSSHMKIRSQSFN) are enriched in polar residues. The span at 1222 to 1240 (TDTTTSGISSMSSSPSRET) shows a compositional bias: low complexity. Residue Ser-1235 is modified to Phosphoserine; by GSK3-beta. Phosphothreonine is present on Thr-1271. Phosphoserine occurs at positions 1274, 1278, 1282, and 1284. The span at 1275–1288 (NHLSLSKSNSVSLV) shows a compositional bias: low complexity. Residues 1275–1298 (NHLSLSKSNSVSLVPPGSSHTLPR) are disordered. At Thr-1295 the chain carries Phosphothreonine. A phosphoserine mark is found at Ser-1302 and Ser-1313. Thr-1332 is modified (phosphothreonine). 2 positions are modified to phosphoserine: Ser-1346 and Ser-1353. Thr-1376 is modified (phosphothreonine). Ser-1385 is subject to Phosphoserine. The residue at position 1386 (Tyr-1386) is a Phosphotyrosine. Phosphoserine occurs at positions 1388, 1396, and 1411. 3 residues coordinate Zn(2+): His-1515, Cys-1520, and Cys-1523. Phosphoserine is present on residues Ser-1571, Ser-1574, Ser-1577, and Ser-1591. Cys-1651 contacts Zn(2+). Residue Thr-1695 is modified to Phosphothreonine; by GSK3-alpha and GSK3-beta.

This sequence belongs to the RICTOR family. In terms of assembly, component of the mechanistic target of rapamycin complex 2 (mTORC2), consisting in two heterotretramers composed of MTOR, MLST8, RICTOR and MAPKAP1/SIN1. The mTORC2 core complex associates with PRR5/PROTOR1 and/or PRR5L/PROTOR2. Contrary to mTORC1, mTORC2 does not bind to and is not sensitive to FKBP12-rapamycin. Binds directly to MTOR and PRR5 within the TORC2 complex; interaction with MTOR is enhanced by deubiquitination of RICTOR by USP9X. Interaction with MAPKAP1 is not enhanced by RICTOR deubiquitination by USP9X. Interacts with CCDC28B. Interacts with NBN. Interacts with SIK3. Interacts with NCKAP1L. Interacts with kinases GSK3A and GSK3B; the interactions lead to phosphorylation of RICTOR at Thr-1695 which facilitates its FBXW7-mediated ubiquitination and subsequent degradation. Interacts with FBXW7; the interaction is enhanced by GSK3-mediated phosphorylation of Thr-1695 and results in RICTOR ubiquitination and degradation. Interacts with ARMH4 (via cytoplasmic tail); this interaction bridges ARMH4 to the mTORC2 complex and inhibits the mTORC2 kinase activity. Interacts with UBXN2A. Interacts with TSPAN8. (Microbial infection) Interacts with vaccinia virus protein F17; this interaction dysregulates MTOR. Post-translationally, phosphorylated by MTOR; when part of mTORC2. Phosphorylated at Thr-1135 by RPS6KB1 downstream of the mTORC1 complex: phosphorylation of RICTOR inhibits mTORC2 signaling by creating a binding site for 14-3-3 proteins. Phosphorylated at Thr-1695 by GSK3A and GSK3B which facilitates RICTOR ubiquitination and subsequent degradation. Phosphorylated at Ser-1235 by GSK3B in response to endoplasmic stress, inhibiting mTORC2 signaling. Ubiquitinated by the SCF(FBXW7) complex, leading to its degradation by the proteasome. Deubiquitinated by USP9X; deubiquitination stabilizes RICTOR and enhances its binding to MTOR, thus promoting mTORC2 complex assembly. In terms of processing, acetylated by EP300/p300 in response to glucose, leading to activate the mTORC2 complex. Acetylation by BLOC1S1/GCN5L1 in response to hypotoxic stress protects RICTOR against ubiquitination and subsequent degradation by the proteasome.

It localises to the cell membrane. It is found in the endoplasmic reticulum membrane. The protein localises to the lysosome membrane. Its function is as follows. Component of the mechanistic target of rapamycin complex 2 (mTORC2), which transduces signals from growth factors to pathways involved in proliferation, cytoskeletal organization, lipogenesis and anabolic output. In response to growth factors, mTORC2 phosphorylates and activates AGC protein kinase family members, including AKT (AKT1, AKT2 and AKT3), PKC (PRKCA, PRKCB and PRKCE) and SGK1. In contrast to mTORC1, mTORC2 is nutrient-insensitive. Within the mTORC2 complex, RICTOR probably acts as a molecular adapter. RICTOR is responsible for the FKBP12-rapamycin-insensitivity of mTORC2. mTORC2 plays a critical role in AKT1 activation by mediating phosphorylation of different sites depending on the context, such as 'Thr-450', 'Ser-473', 'Ser-477' or 'Thr-479', facilitating the phosphorylation of the activation loop of AKT1 on 'Thr-308' by PDPK1/PDK1 which is a prerequisite for full activation. mTORC2 catalyzes the phosphorylation of SGK1 at 'Ser-422' and of PRKCA on 'Ser-657'. The mTORC2 complex also phosphorylates various proteins involved in insulin signaling, such as FBXW8 and IGF2BP1. mTORC2 acts upstream of Rho GTPases to regulate the actin cytoskeleton, probably by activating one or more Rho-type guanine nucleotide exchange factors. mTORC2 promotes the serum-induced formation of stress-fibers or F-actin. The protein is Rapamycin-insensitive companion of mTOR of Homo sapiens (Human).